A 263-amino-acid polypeptide reads, in one-letter code: Putative steroid dehydrogenase 4 (263 aa).

The Proton acceptor role is filled by tyrosine 154.

It belongs to the short-chain dehydrogenases/reductases (SDR) family. 17-beta-HSD 3 subfamily.

In Caenorhabditis elegans, this protein is Putative steroid dehydrogenase 4 (stdh-4).